Reading from the N-terminus, the 257-residue chain is Pyridoxine/pyridoxamine 5'-phosphate oxidase (257 aa).

33–36 (RIKY) contacts substrate. Residue 90–93 (RFVL) participates in FMN binding. A pyridoxal 5'-phosphate-binding site is contributed by K95. Residues 105–106 (YT) and K112 contribute to the FMN site. Pyridoxal 5'-phosphate-binding residues include Y152, R156, and S160. FMN-binding positions include 169–170 (QS) and W216. Residue 222–224 (RLH) coordinates substrate. R226 is an FMN binding site.

The protein belongs to the pyridoxamine 5'-phosphate oxidase family. In terms of assembly, homodimer. Requires FMN as cofactor. Expressed in silk gland and fat body of the larva.

It catalyses the reaction pyridoxamine 5'-phosphate + O2 + H2O = pyridoxal 5'-phosphate + H2O2 + NH4(+). The enzyme catalyses pyridoxine 5'-phosphate + O2 = pyridoxal 5'-phosphate + H2O2. Its pathway is cofactor metabolism; pyridoxal 5'-phosphate salvage; pyridoxal 5'-phosphate from pyridoxamine 5'-phosphate: step 1/1. It functions in the pathway cofactor metabolism; pyridoxal 5'-phosphate salvage; pyridoxal 5'-phosphate from pyridoxine 5'-phosphate: step 1/1. Functionally, catalyzes the oxidation of either pyridoxine 5'-phosphate (PNP) or pyridoxamine 5'-phosphate (PMP) into pyridoxal 5'-phosphate (PLP). In Bombyx mori (Silk moth), this protein is Pyridoxine/pyridoxamine 5'-phosphate oxidase.